A 92-amino-acid polypeptide reads, in one-letter code: DNA-directed RNA polymerase subunit omega (92 aa).

Belongs to the RNA polymerase subunit omega family. The RNAP catalytic core consists of 2 alpha, 1 beta, 1 beta' and 1 omega subunit. When a sigma factor is associated with the core the holoenzyme is formed, which can initiate transcription.

It catalyses the reaction RNA(n) + a ribonucleoside 5'-triphosphate = RNA(n+1) + diphosphate. Its function is as follows. Promotes RNA polymerase assembly. Latches the N- and C-terminal regions of the beta' subunit thereby facilitating its interaction with the beta and alpha subunits. This is DNA-directed RNA polymerase subunit omega from Shewanella denitrificans (strain OS217 / ATCC BAA-1090 / DSM 15013).